A 419-amino-acid polypeptide reads, in one-letter code: RNA polymerase sigma factor sigD, chloroplastic (419 aa).

A chloroplast-targeting transit peptide spans 1-52; it reads MATTIPTTATATMCPSPPVPTISPLLRTTHQCQPSPSLSSPFSIKLSTALVC. The Polymerase core binding motif lies at 207 to 220; sequence DLIQEGSIGLLRGA. A DNA-binding region (H-T-H motif) is located at residues 377 to 396; it reads FEEIGKSLKLSRERVRQING.

It belongs to the sigma-70 factor family. As to expression, mostly expressed in leaves, and to a lesser extent in roots. Present in seedlings.

It localises to the plastid. Its subcellular location is the chloroplast. In terms of biological role, sigma factors are initiation factors that promote the attachment of plastid-encoded RNA polymerase (PEP) to specific initiation sites and are then released. Regulates transcription of the ndhF gene which codes for a subunit of the plastid NDH [NAD(P)H dehydrogenase] complex. The chain is RNA polymerase sigma factor sigD, chloroplastic (SIGD) from Arabidopsis thaliana (Mouse-ear cress).